The chain runs to 217 residues: NAD(P)H-quinone oxidoreductase subunit M, chloroplastic (217 aa).

A chloroplast-targeting transit peptide spans Met1 to Val21. A disordered region spans residues Glu48–Pro67. Residues Glu50 to Lys62 show a composition bias toward basic and acidic residues.

It belongs to the NDH complex subunit M family. Part of the chloroplast NDH complex, composed of a mixture of chloroplast and nucleus encoded subunits. Component of the NDH subcomplex A, at least composed of ndhH, ndhI, ndhJ, ndhK, ndhL, ndhM, ndhN and ndhO.

It is found in the plastid. Its subcellular location is the chloroplast thylakoid membrane. It carries out the reaction a plastoquinone + NADH + (n+1) H(+)(in) = a plastoquinol + NAD(+) + n H(+)(out). The enzyme catalyses a plastoquinone + NADPH + (n+1) H(+)(in) = a plastoquinol + NADP(+) + n H(+)(out). NDH shuttles electrons from NAD(P)H:plastoquinone, via FMN and iron-sulfur (Fe-S) centers, to quinones in the photosynthetic chain and possibly in a chloroplast respiratory chain. The immediate electron acceptor for the enzyme in this species is believed to be plastoquinone. Couples the redox reaction to proton translocation, and thus conserves the redox energy in a proton gradient. This is NAD(P)H-quinone oxidoreductase subunit M, chloroplastic from Arabidopsis thaliana (Mouse-ear cress).